A 285-amino-acid chain; its full sequence is NAD kinase (285 aa).

Aspartate 66 acts as the Proton acceptor in catalysis. NAD(+)-binding positions include 66 to 67 (DG), 137 to 138 (ND), arginine 148, arginine 165, aspartate 167, and 178 to 183 (TAYSMS).

The protein belongs to the NAD kinase family. Requires a divalent metal cation as cofactor.

It is found in the cytoplasm. The enzyme catalyses NAD(+) + ATP = ADP + NADP(+) + H(+). Functionally, involved in the regulation of the intracellular balance of NAD and NADP, and is a key enzyme in the biosynthesis of NADP. Catalyzes specifically the phosphorylation on 2'-hydroxyl of the adenosine moiety of NAD to yield NADP. In Chlorobium luteolum (strain DSM 273 / BCRC 81028 / 2530) (Pelodictyon luteolum), this protein is NAD kinase.